Reading from the N-terminus, the 664-residue chain is MFRLVQQQTLKSRVPNQFVSASRNSLNSQFRFNSAVALERNPQQDPTTAAPAKSSSDKRNSKKKYENNEIIERNVKKVRNLRRNIKFDNFKNSPNSPAFSKLNALDDCLARGLEASSSRAPDGKFLDQSSLFWDSVSSSMNIYRELVITGDLNNHRASRVIQLMHVALKVNRTQLTSMNKKPDYDSQSFHKEMTNYLCESLREISGDILANRVSVSEHGAAHLLSSFKELLLYEETLNIWKAAVNSENKDIVKSFMFPNVVGVVLPLLYENGTTFEEIKKLYEKSASNTTRSHGSPSLVLGMIKTSLAANENEHALSLFQEMCTSEGFGVSPYAVLTGTHLAFIGECKDLYVAKSFFERALSKDMPYKINLQVSSVKQLIQNIWDQTHDFNEVVDVWTKATKYYGKDVSHGISSSLNSKFISIFFENYVTDKAAGLQHLQELVTAYDEMKAIDEPFLNIILTKCTVWQDRNIIESIEKSYELYHIPKTIVTYRIILKAMGSISVPNDVIREKWVQLIQKADQIGQTYIANADWAALRDATVTYTQEQFKNGGSYEMTTSDSYNPALEAANASGAFDDFNEPTSGTKHADHLNTQTNKEDNDRILLYYQLVKRYGVYCRDPKQYARITSGIALNFEVAQPYLGLVNTMDVSSIYVPPLRNFHLNH.

Residues 1–32 (MFRLVQQQTLKSRVPNQFVSASRNSLNSQFRF) constitute a mitochondrion transit peptide. Residues 38 to 68 (LERNPQQDPTTAAPAKSSSDKRNSKKKYENN) form a disordered region. Residues 55 to 68 (SSDKRNSKKKYENN) are compositionally biased toward basic and acidic residues.

Belongs to the RMD9 family. As to quaternary structure, monomer. Post-translationally, phosphorylated. Phosphorylation promotes binding to RNA.

It localises to the mitochondrion inner membrane. Functionally, binds the 3'-UTR of mitochondrial mRNAs. Involved in the processing or stability of mitochondrial mRNAs. This is RNA-binding protein RMD9, mitochondrial (RMD9) from Kluyveromyces lactis (strain ATCC 8585 / CBS 2359 / DSM 70799 / NBRC 1267 / NRRL Y-1140 / WM37) (Yeast).